Consider the following 612-residue polypeptide: Dihydroxy-acid dehydratase (612 aa).

A Mg(2+)-binding site is contributed by Asp-81. Residue Cys-122 coordinates [2Fe-2S] cluster. Asp-123 and Lys-124 together coordinate Mg(2+). The residue at position 124 (Lys-124) is an N6-carboxylysine. Cys-195 lines the [2Fe-2S] cluster pocket. Residue Glu-491 participates in Mg(2+) binding. The active-site Proton acceptor is Ser-517.

The protein belongs to the IlvD/Edd family. In terms of assembly, homodimer. It depends on [2Fe-2S] cluster as a cofactor. Requires Mg(2+) as cofactor.

It catalyses the reaction (2R)-2,3-dihydroxy-3-methylbutanoate = 3-methyl-2-oxobutanoate + H2O. The enzyme catalyses (2R,3R)-2,3-dihydroxy-3-methylpentanoate = (S)-3-methyl-2-oxopentanoate + H2O. The protein operates within amino-acid biosynthesis; L-isoleucine biosynthesis; L-isoleucine from 2-oxobutanoate: step 3/4. It participates in amino-acid biosynthesis; L-valine biosynthesis; L-valine from pyruvate: step 3/4. Its function is as follows. Functions in the biosynthesis of branched-chain amino acids. Catalyzes the dehydration of (2R,3R)-2,3-dihydroxy-3-methylpentanoate (2,3-dihydroxy-3-methylvalerate) into 2-oxo-3-methylpentanoate (2-oxo-3-methylvalerate) and of (2R)-2,3-dihydroxy-3-methylbutanoate (2,3-dihydroxyisovalerate) into 2-oxo-3-methylbutanoate (2-oxoisovalerate), the penultimate precursor to L-isoleucine and L-valine, respectively. The polypeptide is Dihydroxy-acid dehydratase (Bartonella henselae (strain ATCC 49882 / DSM 28221 / CCUG 30454 / Houston 1) (Rochalimaea henselae)).